The sequence spans 126 residues: SH2 domain-containing protein 1A (126 aa).

Residues 6 to 102 form the SH2 domain; it reads VYHGKISREM…GIVTPLQYPV (97 aa). The tract at residues 67–92 is interaction with FYN SH3 domain; that stretch reads ETAPGVHKRFFRKVKNLISAFQKPDQ. Position 89 is an N6-acetyllysine (Lys-89). Residues 100–126 form a disordered region; that stretch reads YPVEKSSARSPQAPTGRRDSDICLKAP. The segment covering 115 to 126 has biased composition (basic and acidic residues); the sequence is GRRDSDICLKAP. Residue Ser-119 is modified to Phosphoserine.

In terms of assembly, interacts with CD84, CD244, LY9, SLAMF1 and FYN. Interacts with NTRK1, NTRK2 and NTRK3.

The protein resides in the cytoplasm. Cytoplasmic adapter regulating receptors of the signaling lymphocytic activation molecule (SLAM) family such as SLAMF1, CD244, LY9, CD84, SLAMF6 and SLAMF7. In SLAM signaling seems to cooperate with SH2D1B/EAT-2. Initially it has been proposed that association with SLAMF1 prevents SLAMF1 binding to inhibitory effectors including INPP5D/SHIP1 and PTPN11/SHP-2. However, by simultaneous interactions, recruits FYN which subsequently phosphorylates and activates SLAMF1. Positively regulates CD244/2B4- and CD84-mediated natural killer (NK) cell functions. Can also promote CD48-, SLAMF6 -, LY9-, and SLAMF7-mediated NK cell activation. In the context of NK cell-mediated cytotoxicity enhances conjugate formation with target cells. May also regulate the activity of the neurotrophin receptors NTRK1, NTRK2 and NTRK3. This is SH2 domain-containing protein 1A (Sh2d1a) from Rattus norvegicus (Rat).